Consider the following 816-residue polypeptide: MNPLCCIAPVSIDDRTNPVVAKSSNHHLGLEAIPVSKHASKPSFSTQASWISQDQLERLSSEVVDDVNLDGKDASSSSNKGCFFFGNCVGAGAGVAGIMYKWVNYGKGWRARWFELEDGVLSYYKIHGPDKIVMNPSREKGVRVIGEESVRYIRKASCGSSNRLGASAVAASRPCKPFGEIHLKVSSIRASKSDDKRLAIFTGTKTLHLRCVSKENRAAWVEAFQVAKDLFPRVASGDILPSEDAVVSTEKLREKLLQEGVGETVVKDCEAIMLSEVSVLQNRLKVLTHKHIILLDTLRQLETEKIELEATVVDETKEHDSCCGQGRRFSDFYSVMSEVSASDSEADNESQDGADVESDEDDVPYFDTNDILSAEAMRSASYRSREAEGNGSIYDKDPFFSDRLQIPARIPQYPYVRRRDNLPEPKEKEKPVGLWSIIKENIGKDLSGVCLPVYFNEPLSSLQKCFEDLEYSYLIDRALEWGKQGNELMRILNIAAFAVSGYASTEGRQCKPFNPLLGETYEADYPDKGLRFFSEKVSHHPMIVACHCEGQGWNFWGDSNIKGKFWGRSIQLDPVGVLTLKFDDGEIYQWSKVTTSIYNIILGKLYCDHYGTMRIKGGSNYSCRLKFKEQSVIDRNPRQVHGFVQDNRTGEKVAILIGKWDEAMYYVLGDPTTKPKGYDPMTEAVLLWERDKSPTKTRYNLSPFAISLNEITPGMIDKLPPTDSRLRPDQRHLENGEYESANAEKLRLEQLQRQARRLQEKGWKPRWFEKDEEGNYRYLGGYWEAREKKDWDRITDIFKKQQQRNSLSSSSSSTFL.

The region spanning glycine 92–aspartate 229 is the PH domain. Residues lysine 290–serine 321 are a coiled coil. The interval serine 340 to aspartate 362 is disordered. Residues serine 344–aspartate 362 are compositionally biased toward acidic residues. The stretch at asparagine 735 to lysine 764 forms a coiled coil.

The protein belongs to the OSBP family. Expressed in roots, leaves, stems and flowers.

Functionally, may be involved in the transport of sterols. The sequence is that of Oxysterol-binding protein-related protein 1D (ORP1D) from Arabidopsis thaliana (Mouse-ear cress).